Here is a 559-residue protein sequence, read N- to C-terminus: Formate--tetrahydrofolate ligase (559 aa).

66–73 is an ATP binding site; that stretch reads TPPGEGKT.

Belongs to the formate--tetrahydrofolate ligase family.

The catalysed reaction is (6S)-5,6,7,8-tetrahydrofolate + formate + ATP = (6R)-10-formyltetrahydrofolate + ADP + phosphate. It participates in one-carbon metabolism; tetrahydrofolate interconversion. The polypeptide is Formate--tetrahydrofolate ligase (Nocardioides sp. (strain ATCC BAA-499 / JS614)).